The chain runs to 461 residues: Photosystem II CP43 reaction center protein (461 aa).

Positions 1-2 (ME) are excised as a propeptide. An N-acetylthreonine modification is found at threonine 3. Residue threonine 3 is modified to Phosphothreonine. A run of 5 helical transmembrane segments spans residues 57 to 81 (LFEV…PHLA), 122 to 143 (LLGP…KDRN), 166 to 188 (KALY…RKIT), 243 to 263 (KPFA…LSYS), and 279 to 300 (WFNN…ASQA). Position 355 (glutamate 355) interacts with [CaMn4O5] cluster. Residues 435 to 459 (RARAAAAGFEKGIDRDFEPVLSMTP) traverse the membrane as a helical segment.

The protein belongs to the PsbB/PsbC family. PsbC subfamily. PSII is composed of 1 copy each of membrane proteins PsbA, PsbB, PsbC, PsbD, PsbE, PsbF, PsbH, PsbI, PsbJ, PsbK, PsbL, PsbM, PsbT, PsbX, PsbY, PsbZ, Psb30/Ycf12, at least 3 peripheral proteins of the oxygen-evolving complex and a large number of cofactors. It forms dimeric complexes. Binds multiple chlorophylls and provides some of the ligands for the Ca-4Mn-5O cluster of the oxygen-evolving complex. It may also provide a ligand for a Cl- that is required for oxygen evolution. PSII binds additional chlorophylls, carotenoids and specific lipids. is required as a cofactor.

Its subcellular location is the plastid. It is found in the chloroplast thylakoid membrane. One of the components of the core complex of photosystem II (PSII). It binds chlorophyll and helps catalyze the primary light-induced photochemical processes of PSII. PSII is a light-driven water:plastoquinone oxidoreductase, using light energy to abstract electrons from H(2)O, generating O(2) and a proton gradient subsequently used for ATP formation. The protein is Photosystem II CP43 reaction center protein of Platanus occidentalis (Sycamore).